The sequence spans 132 residues: Small ribosomal subunit protein uS8 (132 aa).

Belongs to the universal ribosomal protein uS8 family. In terms of assembly, part of the 30S ribosomal subunit. Contacts proteins S5 and S12.

Its function is as follows. One of the primary rRNA binding proteins, it binds directly to 16S rRNA central domain where it helps coordinate assembly of the platform of the 30S subunit. This chain is Small ribosomal subunit protein uS8, found in Roseiflexus castenholzii (strain DSM 13941 / HLO8).